Reading from the N-terminus, the 335-residue chain is Adenine deaminase (335 aa).

Residues H17, H19, and H197 each contribute to the Zn(2+) site. The active-site Proton donor is the E200. Position 278 (D278) interacts with Zn(2+). Substrate is bound at residue D279.

This sequence belongs to the metallo-dependent hydrolases superfamily. Adenosine and AMP deaminases family. Adenine deaminase type 2 subfamily. The cofactor is Zn(2+).

The enzyme catalyses adenine + H2O + H(+) = hypoxanthine + NH4(+). In terms of biological role, catalyzes the hydrolytic deamination of adenine to hypoxanthine. Plays an important role in the purine salvage pathway and in nitrogen catabolism. This is Adenine deaminase from Marinomonas sp. (strain MWYL1).